The sequence spans 1015 residues: MGAERRLLSIKEAFRLAQQPHQNQAKLVVALSRTYRTMDDKTVFHEEFIHYLKYVMVVYKREPAVERVIEFAAKFVTSFHQSDMEDDEEEEDGGLLNYLFTFLLKSHEANSNAVRFRVCLLINKLLGSMPENAQIDDDVFDKINKAMLIRLKDKIPNVRIQAVLALSRLQDPKDDECPVVNAYATLIENDSNPEVRRAVLSCIAPSAKTLPKIVGRTKDVKEAVRKLAYQVLAEKVHMRAMSIAQRVMLLQQGLNDRSDAVKQAMQKHLLQGWLRFSEGNILELLHRLDVENSSEVAVSVLNALFSITPLSELVGLCKNNDGRKLIPVETLTPEIALYWCALCEYLKSKGDEGEEFLEQILPEPVVYADYLLSYIQSIPVVNEEHRGDFSYIGNLMTKEFIGQQLILIIKSLDTSEEGGRKKLLAVLQEILILPTIPISLVSFLVERLLHIIIDDNKRTQIVTEIISEIRAPIVTVGVNNDPADVRKKELKMAEIKVKLIEAKEALENCITLQDFNRASELKEEIKALEDARINLLKETEQLEIKEVHIEKNDAETLQKCLILCYELLKQMSISTGLSATMNGIIESLILPGIISIHPVVRNLAVLCLGCCGLQNQDFARKHFVLLLQVLQIDDVTIKISALKAIFDQLMTFGIEPFKTKKIKTLHCEGTEINSDDEQESKEVEETATAKNVLKLLSDFLDSEVSELRTGAAEGLAKLMFSGLLVSSRILSRLILLWYNPVTEEDVQLRHCLGVFFPVFAYASRTNQECFEEAFLPTLQTLANAPASSPLAEIDITNVAELLVDLTRPSGLNPQAKTSQDYQALTVHDNLAMKICNEILTSPCSPEIRVYTKALSSLELSSHLAKDLLVLLNEILEQVKDRTCLRALEKIKIQLEKGNKEFGDQAEAAQDATLTTTTFQNEDEKNKEVYMTPLRGVKATQASKSTQLKTNRGQRKVTVSARTNRRCQTAEADSESDHEVPEPESEMKMRLPRRAKTAALEKSKLNLAQFLNEDLS.

5 HEAT repeats span residues 94 to 131, 138 to 173, 174 to 212, 238 to 275, and 276 to 313; these read GLLN…SMPE, DVFD…QDPK, DDEC…TLPK, MRAM…GWLR, and FSEG…LSEL. Serine 390 is subject to Phosphoserine. HEAT repeat units lie at residues 399–436, 439–478, and 617–654; these read EFIG…LPTI, SLVS…TVGV, and DFAR…TFGI. Serine 674 bears the Phosphoserine mark. HEAT repeat units lie at residues 687-724 and 865-907; these read ATAK…SGLL and KDLL…QAEA. At threonine 931 the chain carries Phosphothreonine. Positions 941–950 are enriched in polar residues; sequence ASKSTQLKTN. Positions 941 to 994 are disordered; that stretch reads ASKSTQLKTNRGQRKVTVSARTNRRCQTAEADSESDHEVPEPESEMKMRLPRRA. Residues serine 973, serine 975, serine 1002, and serine 1015 each carry the phosphoserine modification. Residues 974–988 show a composition bias toward basic and acidic residues; that stretch reads ESDHEVPEPESEMKM.

Belongs to the CND3 (condensin subunit 3) family. Component of the condensin complex, which contains the SMC2 and SMC4 heterodimer, and three non SMC subunits that probably regulate the complex: NCAPH/BRRN1, NCAPD2/CAPD2 and NCAPG. In terms of processing, phosphorylated by CDK1. Its phosphorylation, as well as that of NCAPD2 and NCAPH subunits, activates the condensin complex and is required for chromosome condensation. In terms of tissue distribution, highly expressed in testis.

It localises to the nucleus. The protein resides in the cytoplasm. Its subcellular location is the chromosome. In terms of biological role, regulatory subunit of the condensin complex, a complex required for conversion of interphase chromatin into mitotic-like condense chromosomes. The condensin complex probably introduces positive supercoils into relaxed DNA in the presence of type I topoisomerases and converts nicked DNA into positive knotted forms in the presence of type II topoisomerases. The chain is Condensin complex subunit 3 (NCAPG) from Homo sapiens (Human).